Here is a 171-residue protein sequence, read N- to C-terminus: 3-hydroxydecanoyl-[acyl-carrier-protein] dehydratase (171 aa).

Histidine 70 is an active-site residue.

Belongs to the thioester dehydratase family. FabA subfamily. As to quaternary structure, homodimer.

Its subcellular location is the cytoplasm. The enzyme catalyses a (3R)-hydroxyacyl-[ACP] = a (2E)-enoyl-[ACP] + H2O. It catalyses the reaction (3R)-hydroxydecanoyl-[ACP] = (2E)-decenoyl-[ACP] + H2O. It carries out the reaction (2E)-decenoyl-[ACP] = (3Z)-decenoyl-[ACP]. The protein operates within lipid metabolism; fatty acid biosynthesis. In terms of biological role, necessary for the introduction of cis unsaturation into fatty acids. Catalyzes the dehydration of (3R)-3-hydroxydecanoyl-ACP to E-(2)-decenoyl-ACP and then its isomerization to Z-(3)-decenoyl-ACP. Can catalyze the dehydratase reaction for beta-hydroxyacyl-ACPs with saturated chain lengths up to 16:0, being most active on intermediate chain length. In Pseudoalteromonas translucida (strain TAC 125), this protein is 3-hydroxydecanoyl-[acyl-carrier-protein] dehydratase.